A 183-amino-acid chain; its full sequence is Protein Syd (183 aa).

The protein belongs to the Syd family.

Its subcellular location is the cell inner membrane. Functionally, interacts with the SecY protein in vivo. May bind preferentially to an uncomplexed state of SecY, thus functioning either as a chelating agent for excess SecY in the cell or as a regulatory factor that negatively controls the translocase function. This chain is Protein Syd, found in Yersinia pestis bv. Antiqua (strain Antiqua).